A 290-amino-acid polypeptide reads, in one-letter code: UPF0761 membrane protein YihY (290 aa).

A run of 6 helical transmembrane segments spans residues 44–64, 104–124, 140–160, 183–203, 210–230, and 244–264; these read LLSLVPLIAVVFALFAAFPMF, VGACGLIVTALLLMYAIDSAL, FAVYWMILTLGPLLAGASLAI, VLPLLLSWISFWLLYSIVPTT, AIVGAFVAALLFEAGKKGFAL, and VLAVIPILFVWVYWTWCIVLL.

It belongs to the UPF0761 family.

Its subcellular location is the cell inner membrane. This chain is UPF0761 membrane protein YihY, found in Salmonella arizonae (strain ATCC BAA-731 / CDC346-86 / RSK2980).